The sequence spans 945 residues: Protein translocase subunit SecA (945 aa).

ATP-binding positions include glutamine 90, 108-112 (GEGKT), and aspartate 509. Residues 533 to 568 (VKPEDGHKPPVPLQRRSESSGFGEDKDVTTDNSKPL) are disordered. Over residues 547 to 561 (RRSESSGFGEDKDVT) the composition is skewed to basic and acidic residues.

The protein belongs to the SecA family. In terms of assembly, monomer and homodimer. Part of the essential Sec protein translocation apparatus which comprises SecA, SecYEG and auxiliary proteins SecDF. Other proteins may also be involved.

The protein localises to the cell inner membrane. It localises to the cellular thylakoid membrane. It is found in the cytoplasm. The enzyme catalyses ATP + H2O + cellular proteinSide 1 = ADP + phosphate + cellular proteinSide 2.. Functionally, part of the Sec protein translocase complex. Interacts with the SecYEG preprotein conducting channel. Has a central role in coupling the hydrolysis of ATP to the transfer of proteins into and across the cell membrane, serving as an ATP-driven molecular motor driving the stepwise translocation of polypeptide chains across the membrane. In terms of biological role, probably participates in protein translocation into and across both the cytoplasmic and thylakoid membranes in cyanobacterial cells. This Prochlorococcus marinus (strain MIT 9211) protein is Protein translocase subunit SecA.